We begin with the raw amino-acid sequence, 273 residues long: Large ribosomal subunit protein uL2 (273 aa).

The disordered stretch occupies residues 228–273; the sequence is VDHPHGGGEGKTSGGRHPVTPWGFPTKGKKTRKNKRTSKFIVKKRK. Residues 254–273 are compositionally biased toward basic residues; that stretch reads KGKKTRKNKRTSKFIVKKRK.

This sequence belongs to the universal ribosomal protein uL2 family. In terms of assembly, part of the 50S ribosomal subunit. Forms a bridge to the 30S subunit in the 70S ribosome.

Its function is as follows. One of the primary rRNA binding proteins. Required for association of the 30S and 50S subunits to form the 70S ribosome, for tRNA binding and peptide bond formation. It has been suggested to have peptidyltransferase activity; this is somewhat controversial. Makes several contacts with the 16S rRNA in the 70S ribosome. This chain is Large ribosomal subunit protein uL2, found in Rickettsia akari (strain Hartford).